The sequence spans 193 residues: Pyridoxal 5'-phosphate synthase subunit PdxT (193 aa).

48-50 serves as a coordination point for L-glutamine; it reads GES. The active-site Nucleophile is the Cys-80. Residues Arg-112 and 140–141 each bind L-glutamine; that span reads IR. Catalysis depends on charge relay system residues His-176 and Glu-178.

This sequence belongs to the glutaminase PdxT/SNO family. In terms of assembly, in the presence of PdxS, forms a dodecamer of heterodimers. Only shows activity in the heterodimer.

The catalysed reaction is aldehydo-D-ribose 5-phosphate + D-glyceraldehyde 3-phosphate + L-glutamine = pyridoxal 5'-phosphate + L-glutamate + phosphate + 3 H2O + H(+). It catalyses the reaction L-glutamine + H2O = L-glutamate + NH4(+). Its pathway is cofactor biosynthesis; pyridoxal 5'-phosphate biosynthesis. Catalyzes the hydrolysis of glutamine to glutamate and ammonia as part of the biosynthesis of pyridoxal 5'-phosphate. The resulting ammonia molecule is channeled to the active site of PdxS. In Mycolicibacterium smegmatis (strain ATCC 700084 / mc(2)155) (Mycobacterium smegmatis), this protein is Pyridoxal 5'-phosphate synthase subunit PdxT.